Consider the following 220-residue polypeptide: Riboflavin kinase (220 aa).

The tract at residues methionine 1–asparagine 92 is H-T-H motif-like. The tract at residues valine 93 to threonine 220 is riboflavin kinase. A CDP-binding site is contributed by glycine 102–arginine 107. Threonine 131 and asparagine 133 together coordinate Mg(2+). Positions 188 and 195 each coordinate FMN. A CDP-binding site is contributed by lysine 200 to arginine 203.

Belongs to the archaeal riboflavin kinase family. The cofactor is Mg(2+).

The enzyme catalyses riboflavin + CTP = CDP + FMN + H(+). The protein operates within cofactor biosynthesis; FMN biosynthesis; FMN from riboflavin (CTP route): step 1/1. Catalyzes the CTP-dependent phosphorylation of riboflavin (vitamin B2) to form flavin mononucleotide (FMN). The protein is Riboflavin kinase (ribK) of Thermoplasma acidophilum (strain ATCC 25905 / DSM 1728 / JCM 9062 / NBRC 15155 / AMRC-C165).